The primary structure comprises 420 residues: Serine/threonine transporter SstT (420 aa).

Transmembrane regions (helical) follow at residues 14–34 (IMIGIVIGTTLGFLVPEWTFI), 40–60 (LFVGALKAIAPILVFVLIIAS), 71–91 (YVGSILVVYLLATFLAAVVAV), 172–192 (ITTVVQMIIGIAPIGILGLVF), 210–230 (LLLLIGTMAVVALVVYPAIVF), 283–303 (IPLGATINMGGAAITITIMTL), 309–329 (LGMSVPIYLALLLSIIAAVSA), 332–352 (ASGIAGGSLLLIPLACSLFGI), and 356–376 (IAMQVVGVGFIVGVVQDSIET).

The protein belongs to the dicarboxylate/amino acid:cation symporter (DAACS) (TC 2.A.23) family.

The protein localises to the cell membrane. The catalysed reaction is L-serine(in) + Na(+)(in) = L-serine(out) + Na(+)(out). It catalyses the reaction L-threonine(in) + Na(+)(in) = L-threonine(out) + Na(+)(out). Functionally, involved in the import of serine and threonine into the cell, with the concomitant import of sodium (symport system). The polypeptide is Serine/threonine transporter SstT (Enterococcus faecalis (strain ATCC 700802 / V583)).